We begin with the raw amino-acid sequence, 459 residues long: MDASTPLPPASSSPRCNPAPQTIHIEFPHHSSSLLESLNRHRLEGKFCDVSLLVQGRELRAHKAVLAAASPYFHDKLLLGDAPRLTLPNVIEADAFEGLLQLIYSGSLHLPLDALPAHLLVASGLQMWQVVDRCSEILRELETSGGISAGGRASSLTLISTTSSGGWCIRSSPFQNPVRSSASTENSVLPESPAGGEGSELEGMLQIQVKVEEEEEQGSAAPLFQTPQPERVSGGVSQACGSHPLPTPALPSKPSEDESSTVDPPAPPVQASQILYVNQENVECKEEIARGTKEKTKVLSGEDSEEKEELRYLLSSGGGESSGAGDPSWKPVDLHGNEILSGDGGPGGTGQAMHGPVKLGGTPPADGKCFACLCGKRFAVKPKRDRHIMLTFSLRPFGCGICNKRFKLKHHLTEHMKTHARALHACPHCGRRFRVQAFFLRHRDLCKGQGWPTYHWTYK.

Residues 48-112 (CDVSLLVQGR…IYSGSLHLPL (65 aa)) form the BTB domain. Residues 178-189 (VRSSASTENSVL) are compositionally biased toward polar residues. 2 disordered regions span residues 178-200 (VRSSASTENSVLPESPAGGEGSE) and 212-274 (EEEE…ASQI). Glycyl lysine isopeptide (Lys-Gly) (interchain with G-Cter in SUMO2) cross-links involve residues K285, K293, and K368. Positions 293–356 (KEKTKVLSGE…GGTGQAMHGP (64 aa)) are disordered. The C2H2-type 1 zinc-finger motif lies at 397-419 (FGCGICNKRFKLKHHLTEHMKTH). The segment at 424–446 (HACPHCGRRFRVQAFFLRHRDLC) adopts a C2H2-type 2; atypical zinc-finger fold.

The protein localises to the nucleus. In terms of biological role, may be involved in transcriptional regulation. The sequence is that of Zinc finger and BTB domain-containing protein 9 (Zbtb9) from Mus musculus (Mouse).